A 156-amino-acid polypeptide reads, in one-letter code: MRCPFCGNVDTQVKDSRPAEDHVAIRRRRFCPACAGRFTTYERVQLRDLVVIKSNGKREDFDRTKLERSIRMALQKRPIEPERVDQMISGMVRRLESLGETDVQSKVIGEIVMERLAAIDTVAYVRFASVYKNFQATGDFEDFLSELRPPAPTTDT.

The segment at 3-34 is a zinc-finger region; that stretch reads CPFCGNVDTQVKDSRPAEDHVAIRRRRFCPAC. An ATP-cone domain is found at 49 to 139; it reads LVVIKSNGKR…VYKNFQATGD (91 aa).

Belongs to the NrdR family. It depends on Zn(2+) as a cofactor.

Its function is as follows. Negatively regulates transcription of bacterial ribonucleotide reductase nrd genes and operons by binding to NrdR-boxes. In Jannaschia sp. (strain CCS1), this protein is Transcriptional repressor NrdR.